We begin with the raw amino-acid sequence, 1141 residues long: DNA-directed RNA polymerase subunit beta (1141 aa).

The protein belongs to the RNA polymerase beta chain family. As to quaternary structure, the RNAP catalytic core consists of 2 alpha, 1 beta, 1 beta' and 1 omega subunit. When a sigma factor is associated with the core the holoenzyme is formed, which can initiate transcription.

The catalysed reaction is RNA(n) + a ribonucleoside 5'-triphosphate = RNA(n+1) + diphosphate. DNA-dependent RNA polymerase catalyzes the transcription of DNA into RNA using the four ribonucleoside triphosphates as substrates. The sequence is that of DNA-directed RNA polymerase subunit beta from Frankia alni (strain DSM 45986 / CECT 9034 / ACN14a).